Reading from the N-terminus, the 784-residue chain is Ribosome biogenesis protein BOP1 homolog (784 aa).

The span at 1–11 (MTKKLALKRKG) shows a compositional bias: basic residues. The interval 1–159 (MTKKLALKRK…DSDTSDEEDI (159 aa)) is disordered. 4 stretches are compositionally biased toward acidic residues: residues 27–36 (SENEEEEEDL), 45–54 (EDSTDDEGID), 62–73 (SEELQFESDEEG), and 84–111 (AEED…EDEE). A compositionally biased stretch (basic and acidic residues) spans 112 to 123 (KDSKLKQSDDKP). The segment covering 124-133 (SSSGAASKKA) has biased composition (low complexity). A compositionally biased stretch (basic and acidic residues) spans 138-148 (LSKRDTSKPEY). A compositionally biased stretch (acidic residues) spans 149–158 (QDSDTSDEED). 7 WD repeats span residues 445–486 (GHTD…RTIE), 488–526 (DEVV…KVLV), 570–612 (THFK…SQIP), 615–653 (KSKG…LVKK), 656–695 (TNSK…KPYQ), 699–738 (LHRN…DLLQ), and 754–784 (RDEF…RLYT).

The protein belongs to the WD repeat BOP1/ERB1 family.

It is found in the nucleus. Its subcellular location is the nucleolus. The protein resides in the nucleoplasm. Required for maturation of ribosomal RNAs and formation of the large ribosomal subunit. The sequence is that of Ribosome biogenesis protein BOP1 homolog from Drosophila erecta (Fruit fly).